Reading from the N-terminus, the 380-residue chain is N5-carboxyaminoimidazole ribonucleotide synthase (380 aa).

ATP-binding positions include Arg108, Lys148, 153-159 (GYDGKGQ), 183-186 (ESWV), Glu191, His214, and 268-269 (NE). Residues 112–298 (KKAIQSAGCE…QFEQHIRAVC (187 aa)) enclose the ATP-grasp domain.

Belongs to the PurK/PurT family. Homodimer.

It carries out the reaction 5-amino-1-(5-phospho-beta-D-ribosyl)imidazole + hydrogencarbonate + ATP = 5-carboxyamino-1-(5-phospho-D-ribosyl)imidazole + ADP + phosphate + 2 H(+). Its pathway is purine metabolism; IMP biosynthesis via de novo pathway; 5-amino-1-(5-phospho-D-ribosyl)imidazole-4-carboxylate from 5-amino-1-(5-phospho-D-ribosyl)imidazole (N5-CAIR route): step 1/2. Its function is as follows. Catalyzes the ATP-dependent conversion of 5-aminoimidazole ribonucleotide (AIR) and HCO(3)(-) to N5-carboxyaminoimidazole ribonucleotide (N5-CAIR). The sequence is that of N5-carboxyaminoimidazole ribonucleotide synthase from Bacillus subtilis (strain 168).